We begin with the raw amino-acid sequence, 106 residues long: Large ribosomal subunit protein uL24 (106 aa).

Belongs to the universal ribosomal protein uL24 family. In terms of assembly, part of the 50S ribosomal subunit.

Functionally, one of two assembly initiator proteins, it binds directly to the 5'-end of the 23S rRNA, where it nucleates assembly of the 50S subunit. One of the proteins that surrounds the polypeptide exit tunnel on the outside of the subunit. The protein is Large ribosomal subunit protein uL24 of Delftia acidovorans (strain DSM 14801 / SPH-1).